We begin with the raw amino-acid sequence, 274 residues long: NH(3)-dependent NAD(+) synthetase (274 aa).

Residue 27–34 participates in ATP binding; that stretch reads GLSGGIDS. Asp-33 lines the Mg(2+) pocket. Arg-121 is a binding site for deamido-NAD(+). ATP is bound at residue Thr-141. Glu-146 contacts Mg(2+). ATP is bound by residues Lys-170 and Ser-192.

This sequence belongs to the NAD synthetase family. As to quaternary structure, homodimer.

The enzyme catalyses deamido-NAD(+) + NH4(+) + ATP = AMP + diphosphate + NAD(+) + H(+). The protein operates within cofactor biosynthesis; NAD(+) biosynthesis; NAD(+) from deamido-NAD(+) (ammonia route): step 1/1. Functionally, catalyzes the ATP-dependent amidation of deamido-NAD to form NAD. Uses ammonia as a nitrogen source. The polypeptide is NH(3)-dependent NAD(+) synthetase (Helicobacter hepaticus (strain ATCC 51449 / 3B1)).